Here is a 333-residue protein sequence, read N- to C-terminus: Extracellular globin (333 aa).

The N-terminal stretch at 1-18 (MHSSIVLAIVLFVAIASA) is a signal peptide. Globin domains lie at 25–167 (CMKS…HHGR) and 174–318 (CMNS…KHAK). 2 residues coordinate heme b: Gln-82 and His-114. A glycan (N-linked (GlcNAc...) asparagine) is linked at Asn-216. Heme b is bound by residues Gln-231 and His-263. The tract at residues 314–333 (DKHAKAEKDHHEGEHKEEHH) is disordered.

The protein belongs to the globin family. In terms of assembly, homooctamer.

Its subcellular location is the secreted. The protein resides in the extracellular space. The polypeptide is Extracellular globin (Pseudoterranova decipiens (Sealworm)).